Consider the following 687-residue polypeptide: Elongation factor G (687 aa).

Residues 8–282 (NKFRNIGIMA…AVLAYLPSPL (275 aa)) enclose the tr-type G domain. Residues 17–24 (AHIDAGKT), 81–85 (DTPGH), and 135–138 (NKMD) contribute to the GTP site.

It belongs to the TRAFAC class translation factor GTPase superfamily. Classic translation factor GTPase family. EF-G/EF-2 subfamily.

The protein localises to the cytoplasm. Its function is as follows. Catalyzes the GTP-dependent ribosomal translocation step during translation elongation. During this step, the ribosome changes from the pre-translocational (PRE) to the post-translocational (POST) state as the newly formed A-site-bound peptidyl-tRNA and P-site-bound deacylated tRNA move to the P and E sites, respectively. Catalyzes the coordinated movement of the two tRNA molecules, the mRNA and conformational changes in the ribosome. The sequence is that of Elongation factor G from Clostridium novyi (strain NT).